Consider the following 394-residue polypeptide: p-hydroxybenzoate hydroxylase (394 aa).

FAD-binding positions include Ser-13, Glu-32, 42-47, and Gln-102; that span reads RIRAGV. Residues Tyr-201, 212–214, and Tyr-222 contribute to the substrate site; that span reads SQR. FAD is bound at residue Asp-286. Pro-293 lines the substrate pocket. Position 299-300 (299-300) interacts with FAD; that stretch reads LN.

This sequence belongs to the aromatic-ring hydroxylase family. Homodimer. FAD serves as cofactor.

The enzyme catalyses 4-hydroxybenzoate + NADPH + O2 + H(+) = 3,4-dihydroxybenzoate + NADP(+) + H2O. The protein operates within aromatic compound metabolism; benzoate degradation via hydroxylation; 3,4-dihydroxybenzoate from benzoate: step 2/2. Catalyzes the incorporation of an atom of dioxygen into p-hydroxybenzoate (p-OHB) to form 3,4-dihydroxybenzoate (3,4DOHB). The reaction occurs in two parts: reduction of the flavin adenine dinucleotide (FAD) in the enzyme by reduced nicotinamide adenine dinucleotide phosphate (NADPH) in response to binding p-hydroxybenzoate to the enzyme and oxidation of reduced FAD with oxygen to form a hydroperoxide, which then oxygenates p-hydroxybenzoate. This Pseudomonas aeruginosa (strain ATCC 15692 / DSM 22644 / CIP 104116 / JCM 14847 / LMG 12228 / 1C / PRS 101 / PAO1) protein is p-hydroxybenzoate hydroxylase.